Reading from the N-terminus, the 273-residue chain is Pantothenate synthetase (273 aa).

27–34 contacts ATP; sequence MGALHNGH. His-34 acts as the Proton donor in catalysis. A (R)-pantoate-binding site is contributed by Gln-58. Beta-alanine is bound at residue Gln-58. 144–147 serves as a coordination point for ATP; the sequence is GKKD. Residue Gln-150 coordinates (R)-pantoate. Residues Val-173 and 181–184 each bind ATP; that span reads LSSR.

The protein belongs to the pantothenate synthetase family. As to quaternary structure, homodimer.

The protein resides in the cytoplasm. The enzyme catalyses (R)-pantoate + beta-alanine + ATP = (R)-pantothenate + AMP + diphosphate + H(+). It functions in the pathway cofactor biosynthesis; (R)-pantothenate biosynthesis; (R)-pantothenate from (R)-pantoate and beta-alanine: step 1/1. In terms of biological role, catalyzes the condensation of pantoate with beta-alanine in an ATP-dependent reaction via a pantoyl-adenylate intermediate. The protein is Pantothenate synthetase of Campylobacter fetus subsp. fetus (strain 82-40).